Consider the following 351-residue polypeptide: Heme A synthase (351 aa).

8 helical membrane passes run 17–37 (WLIL…ATRL), 103–123 (LIGL…WLGQ), 129–149 (LVGL…MVSS), 164–184 (LMTH…LWLD), 201–221 (AMAL…VAGL), 261–281 (FNHR…AWAF), 289–309 (EFAF…LTLV), and 316–336 (LALV…YTVW). Position 263 (His-263) interacts with heme. Heme is bound at residue His-320.

This sequence belongs to the COX15/CtaA family. Type 2 subfamily. In terms of assembly, interacts with CtaB. It depends on heme b as a cofactor.

It is found in the cell membrane. The catalysed reaction is Fe(II)-heme o + 2 A + H2O = Fe(II)-heme a + 2 AH2. Its pathway is porphyrin-containing compound metabolism; heme A biosynthesis; heme A from heme O: step 1/1. Catalyzes the conversion of heme O to heme A by two successive hydroxylations of the methyl group at C8. The first hydroxylation forms heme I, the second hydroxylation results in an unstable dihydroxymethyl group, which spontaneously dehydrates, resulting in the formyl group of heme A. The chain is Heme A synthase from Hyphomonas neptunium (strain ATCC 15444).